The following is a 1941-amino-acid chain: Myosin-7B (1941 aa).

The Myosin N-terminal SH3-like domain occupies 30 to 80 (DGKKRVWVPDEQDAYVEAEVKTEATGGKVTVETKDQKVLTVRETEMQPMNP). In terms of domain architecture, Myosin motor spans 84 to 785 (DLLEDMAMMT…LLGILEELRD (702 aa)). 177–184 (GESGAGKT) contacts ATP. 2 actin-binding regions span residues 662-684 (LNKL…VPNE) and 764-778 (QFGH…GLLG). The IQ domain occupies 788-817 (LAKVLTLLQARSRGRLMRLEYQRMLGGRDA). A coiled-coil region spans residues 846–1935 (LLRSAQAEEE…KLRARSRDAL (1090 aa)). Residues 1887-1941 (RQFEEAEQQASTNLAKYRKAQHELDDAEERADMAETQANKLRARSRDALGPKHKE) form a disordered region. The span at 1930–1941 (RSRDALGPKHKE) shows a compositional bias: basic and acidic residues.

It belongs to the TRAFAC class myosin-kinesin ATPase superfamily. Myosin family. Muscle myosin is a hexameric protein that consists of 2 heavy chain subunits (MHC), 2 alkali light chain subunits (MLC) and 2 regulatory light chain subunits (MLC-2).

The protein resides in the membrane. In terms of biological role, involved in muscle contraction. The sequence is that of Myosin-7B (Myh7b) from Mus musculus (Mouse).